The primary structure comprises 140 residues: Translation initiation factor 2 subunit beta (140 aa).

Belongs to the eIF-2-beta/eIF-5 family. In terms of assembly, heterotrimer composed of an alpha, a beta and a gamma chain.

EIF-2 functions in the early steps of protein synthesis by forming a ternary complex with GTP and initiator tRNA. This chain is Translation initiation factor 2 subunit beta, found in Pyrococcus furiosus (strain ATCC 43587 / DSM 3638 / JCM 8422 / Vc1).